A 199-amino-acid polypeptide reads, in one-letter code: 3-isopropylmalate dehydratase small subunit (199 aa).

It belongs to the LeuD family. LeuD type 1 subfamily. In terms of assembly, heterodimer of LeuC and LeuD.

It catalyses the reaction (2R,3S)-3-isopropylmalate = (2S)-2-isopropylmalate. Its pathway is amino-acid biosynthesis; L-leucine biosynthesis; L-leucine from 3-methyl-2-oxobutanoate: step 2/4. In terms of biological role, catalyzes the isomerization between 2-isopropylmalate and 3-isopropylmalate, via the formation of 2-isopropylmaleate. In Bacillus licheniformis (strain ATCC 14580 / DSM 13 / JCM 2505 / CCUG 7422 / NBRC 12200 / NCIMB 9375 / NCTC 10341 / NRRL NRS-1264 / Gibson 46), this protein is 3-isopropylmalate dehydratase small subunit.